Consider the following 310-residue polypeptide: Olfactory receptor 5P53 (310 aa).

The Extracellular portion of the chain corresponds to 1 to 25 (MEAENHTTVAELIILGLTEDPKLCI). N5 is a glycosylation site (N-linked (GlcNAc...) asparagine). The helical transmembrane segment at 26–46 (VFFVIFLGVYIVTLVGNISII) threads the bilayer. At 47–54 (TLIRISSQ) the chain is on the cytoplasmic side. A helical membrane pass occupies residues 55–75 (LHTPMYLFLSHLAFVDILYST). Residues 76–99 (SVSVIMHMELLGHGLALPVAACAA) lie on the Extracellular side of the membrane. An intrachain disulfide couples C97 to C189. Residues 100–120 (QLCITVSFGSAECFLLAAMAY) form a helical membrane-spanning segment. The Cytoplasmic segment spans residues 121–133 (DRYVAICSPLLYS). Residues 134 to 154 (TLMSPRVCFLLLGMSYVGGCM) traverse the membrane as a helical segment. The Extracellular portion of the chain corresponds to 155–196 (NGWTFTGCLLSLSFCGPNQIDHFFCDFSPLLKLSCSDVSIIG). Residues 197-217 (IIPSISSGSIIVVTVFVIAVS) traverse the membrane as a helical segment. Topologically, residues 218–237 (YIYILITILNMRSTEGRHKA) are cytoplasmic. Residues 238-258 (FSTCTSHLTAVTLYYGTITFI) traverse the membrane as a helical segment. Residues 259-271 (YVMPKSNYSTEQN) lie on the Extracellular side of the membrane. Residue N265 is glycosylated (N-linked (GlcNAc...) asparagine). Residues 272 to 292 (KVLSVFYTVVIPMLNPLIYSL) form a helical membrane-spanning segment. The Cytoplasmic segment spans residues 293-310 (RNRDVKEALRKATVRVYS).

The protein belongs to the G-protein coupled receptor 1 family.

The protein resides in the cell membrane. In terms of biological role, potential odorant receptor. The chain is Olfactory receptor 5P53 from Mus musculus (Mouse).